Consider the following 129-residue polypeptide: uncharacterized protein (129 aa).

This is an uncharacterized protein from Oryza sativa subsp. indica (Rice).